Reading from the N-terminus, the 126-residue chain is Fluoride-specific ion channel FluC (126 aa).

Helical transmembrane passes span 5 to 25 (VLAV…LGLW), 35 to 55 (WGTL…MAFF), 68 to 88 (FAVT…LEMF), and 99 to 119 (ALVG…LGFL). Residues glycine 75 and threonine 78 each contribute to the Na(+) site.

The protein belongs to the fluoride channel Fluc/FEX (TC 1.A.43) family.

It is found in the cell inner membrane. It carries out the reaction fluoride(in) = fluoride(out). Its activity is regulated as follows. Na(+) is not transported, but it plays an essential structural role and its presence is essential for fluoride channel function. In terms of biological role, fluoride-specific ion channel. Important for reducing fluoride concentration in the cell, thus reducing its toxicity. The chain is Fluoride-specific ion channel FluC from Marinobacter nauticus (strain ATCC 700491 / DSM 11845 / VT8) (Marinobacter aquaeolei).